The sequence spans 54 residues: Rubredoxin (54 aa).

M1 carries the N-formylmethionine modification. A Rubredoxin-like domain is found at 1-54 (MKKYTCTVCGYIYNPEDGDPDNGVNPGTDFKDIPDDWVCPLCGVGKDQFEEVEE). Residues C6, C9, C39, and C42 each contribute to the Fe cation site.

Belongs to the rubredoxin family. It depends on Fe(3+) as a cofactor.

Functionally, rubredoxin is a small nonheme, iron protein lacking acid-labile sulfide. Its single Fe, chelated to 4 Cys, functions as an electron acceptor and may also stabilize the conformation of the molecule. The chain is Rubredoxin from Clostridium pasteurianum.